The following is a 210-amino-acid chain: FMN-dependent NADH:quinone oxidoreductase (210 aa).

Residues Ser10 and 16 to 18 (SRS) contribute to the FMN site.

The protein belongs to the azoreductase type 1 family. In terms of assembly, homodimer. The cofactor is FMN.

It catalyses the reaction 2 a quinone + NADH + H(+) = 2 a 1,4-benzosemiquinone + NAD(+). The catalysed reaction is N,N-dimethyl-1,4-phenylenediamine + anthranilate + 2 NAD(+) = 2-(4-dimethylaminophenyl)diazenylbenzoate + 2 NADH + 2 H(+). In terms of biological role, quinone reductase that provides resistance to thiol-specific stress caused by electrophilic quinones. Also exhibits azoreductase activity. Catalyzes the reductive cleavage of the azo bond in aromatic azo compounds to the corresponding amines. The chain is FMN-dependent NADH:quinone oxidoreductase from Kineococcus radiotolerans (strain ATCC BAA-149 / DSM 14245 / SRS30216).